Here is a 758-residue protein sequence, read N- to C-terminus: GPI ethanolamine phosphate transferase 2 (758 aa).

Residues Asn28, Asn77, and Asn178 are each glycosylated (N-linked (GlcNAc...) asparagine). 3 helical membrane passes run 405–425 (LVAISILGACSILSLILFRNL), 431–451 (LLAFAPFVVQNIIIVFSSSFI), and 455–472 (HVIWYFAAVSLSLLQLLN). A glycan (N-linked (GlcNAc...) asparagine) is linked at Asn493. The next 6 helical transmembrane spans lie at 533-553 (PSPINFLSSMFIAFYKLMPII), 561-581 (PIIASFDYTFFVRIIWSLLLI), 598-618 (LFILLLTRLENMGLYLLYDIW), 667-687 (IFAVGILLFTSVFAGALWWCL), 698-718 (VKTFWIMSSISLTFLCISCFI), and 733-753 (LLYNASWASMYFLAKCLISTI).

It belongs to the PIGG/PIGN/PIGO family. PIGG subfamily.

Its subcellular location is the endoplasmic reticulum membrane. It functions in the pathway glycolipid biosynthesis; glycosylphosphatidylinositol-anchor biosynthesis. Functionally, ethanolamine phosphate transferase involved in glycosylphosphatidylinositol-anchor biosynthesis. Transfers ethanolamine phosphate to the GPI second mannose. This Schizosaccharomyces pombe (strain 972 / ATCC 24843) (Fission yeast) protein is GPI ethanolamine phosphate transferase 2 (las21).